We begin with the raw amino-acid sequence, 471 residues long: Putative multidrug resistance protein MdtD (471 aa).

Residues 1 to 11 are Periplasmic-facing; sequence MTDLPDSTRWQ. A helical transmembrane segment spans residues 12-32; the sequence is LWIVAFGFFMQSLDTTIVNTA. At 33–48 the chain is on the cytoplasmic side; sequence LPSMAQSLGESPLHMH. The chain crosses the membrane as a helical span at residues 49–69; the sequence is MVIVSYVLTVAVMLPASGWLA. The Periplasmic segment spans residues 70 to 76; it reads DKVGVRN. Residues 77–97 form a helical membrane-spanning segment; sequence IFFTAIVLFTLGSLFCALSGT. At 98-101 the chain is on the cytoplasmic side; sequence LNEL. Residues 102-124 traverse the membrane as a helical segment; it reads LLARALQGVGGAMMVPVGRLTVM. Topologically, residues 125 to 137 are periplasmic; that stretch reads KIVPREQYMAAMT. Residues 138 to 158 form a helical membrane-spanning segment; sequence FVTLPGQVGPLLGPALGGLLV. The Cytoplasmic portion of the chain corresponds to 159–164; it reads EYASWH. The helical transmembrane segment at 165 to 185 threads the bilayer; that stretch reads WIFLINIPVGIIGAIATLLLM. The Periplasmic segment spans residues 186 to 196; the sequence is PNYTMQTRRFD. A helical membrane pass occupies residues 197–217; that stretch reads LSGFLLLAVGMAVLTLALDGS. Over 218–224 the chain is Cytoplasmic; that stretch reads KGTGLSP. The chain crosses the membrane as a helical span at residues 225–245; it reads LTIAGLVAVGVVALVLYLLHA. Over 246-262 the chain is Periplasmic; the sequence is RNNNRALFSLKLFRTRT. A helical transmembrane segment spans residues 263–283; that stretch reads FSLGLAGSFAGRIGSGMLPFM. Residues 284–285 are Cytoplasmic-facing; sequence TP. A helical membrane pass occupies residues 286–306; it reads VFLQIGLGFSPFHAGLMMIPM. At 307-341 the chain is on the periplasmic side; sequence VLGSMGMKRIVVQVVNRFGYRRVLVATTLGLSLVT. The chain crosses the membrane as a helical span at residues 342–362; sequence LLFMTTALLGWYYVLPFVLFL. Residues 363–395 are Cytoplasmic-facing; the sequence is QGMVNSTRFSSMNTLTLKDLPDNLASSGNSLLS. A helical membrane pass occupies residues 396–416; that stretch reads MIMQLSMSIGVTIAGLLLGLF. Residues 417–430 are Periplasmic-facing; the sequence is GSQHVSVDSGTTQT. The chain crosses the membrane as a helical span at residues 431–451; it reads VFMYTWLSMALIIALPAFIFA. Over 452–471 the chain is Cytoplasmic; that stretch reads RVPNDTHQNVAISRRKRSAQ.

This sequence belongs to the major facilitator superfamily. TCR/Tet family.

The protein localises to the cell inner membrane. This Escherichia coli (strain K12 / MC4100 / BW2952) protein is Putative multidrug resistance protein MdtD.